Reading from the N-terminus, the 222-residue chain is UPF0502 protein Lcho_2066 (222 aa).

It belongs to the UPF0502 family.

The polypeptide is UPF0502 protein Lcho_2066 (Leptothrix cholodnii (strain ATCC 51168 / LMG 8142 / SP-6) (Leptothrix discophora (strain SP-6))).